We begin with the raw amino-acid sequence, 434 residues long: Meiosis-specific kinetochore protein (434 aa).

Disordered stretches follow at residues 1 to 102 and 249 to 289; these read MDKI…PCET and VFAE…PDNK. The span at 46-62 shows a compositional bias: basic and acidic residues; the sequence is KGKEQGLRKITEKKELS. Positions 64–76 are enriched in polar residues; sequence LTGSSSQRPSLLS. The POLO box domain (PBD)-binding motif lies at 334–336; the sequence is STP. Residues 391 to 394 form a required for localization to kinetochores region; it reads EICC. Residues 404 to 424 form a disordered region; sequence QMRRKDPAVKNRCSPPKDVPL.

In terms of assembly, interacts with CENPC. Interacts with PLK1; required for recruitment of PLK1 at kinetochores. In terms of tissue distribution, germ cell-specific. Expressed in both testis and ovary. Not expressed in other tissues.

It is found in the chromosome. The protein localises to the centromere. It localises to the kinetochore. Functionally, key regulator of kinetochore function during meiosis I: required both for mono-orientation of kinetochores on sister chromosomes and protection of centromeric cohesin from separase-mediated cleavage. Acts by facilitating kinetochore mono-orientation during meiosis I, when kinetochores on sister chromosomes face the same direction and are thus captured and pulled by spindle fibers from the same pole. Also required to prevent cleavage of cohesin at centromeres during meiosis I, possibly by acting as a regulator of the shugoshin-dependent protection pathway. Acts in collaboration with PLK1: required for PLK1 enrichment to kinetochores. Not required during meiosis II or mitosis. This Mus musculus (Mouse) protein is Meiosis-specific kinetochore protein.